The primary structure comprises 135 residues: Ribonuclease P protein component 2 (135 aa).

This sequence belongs to the eukaryotic/archaeal RNase P protein component 2 family. Consists of a catalytic RNA component and at least 4-5 protein subunits.

The protein localises to the cytoplasm. The catalysed reaction is Endonucleolytic cleavage of RNA, removing 5'-extranucleotides from tRNA precursor.. Its function is as follows. Part of ribonuclease P, a protein complex that generates mature tRNA molecules by cleaving their 5'-ends. This chain is Ribonuclease P protein component 2, found in Methanococcus aeolicus (strain ATCC BAA-1280 / DSM 17508 / OCM 812 / Nankai-3).